Reading from the N-terminus, the 441-residue chain is Homogentisate 1,2-dioxygenase (441 aa).

His287 (proton acceptor) is an active-site residue. Fe cation-binding residues include His330 and Glu336. Positions 345 and 366 each coordinate homogentisate. Fe cation is bound at residue His366.

The protein belongs to the homogentisate dioxygenase family. As to quaternary structure, hexamer; dimer of trimers. The cofactor is Fe cation.

It carries out the reaction homogentisate + O2 = 4-maleylacetoacetate + H(+). It functions in the pathway amino-acid degradation; L-phenylalanine degradation; acetoacetate and fumarate from L-phenylalanine: step 4/6. Its function is as follows. Involved in the catabolism of homogentisate (2,5-dihydroxyphenylacetate or 2,5-OH-PhAc), a central intermediate in the degradation of phenylalanine and tyrosine. Catalyzes the oxidative ring cleavage of the aromatic ring of homogentisate to yield maleylacetoacetate. The chain is Homogentisate 1,2-dioxygenase from Xanthomonas oryzae pv. oryzae (strain KACC10331 / KXO85).